The primary structure comprises 197 residues: Dehydrin DHN1 (197 aa).

Over residues 1–14 (MSQYQNQYGAQTGM) the composition is skewed to polar residues. Disordered regions lie at residues 1–86 (MSQY…GTNP) and 133–197 (GTEQ…CTGH). 2 tandem repeats follow at residues 16 to 21 (DEYGNP) and 26 to 31 (DQYGNP). The segment at 16–31 (DEYGNPVNQVDQYGNP) is 2 X approximate repeats. A compositionally biased stretch (gly residues) spans 74–83 (THTGGVGGYG). The 2-1 repeat unit spans residues 126–133 (KIKEKIPG). A 2 X approximate repeats region spans residues 126-190 (KIKEKIPGTE…MDKIKEKLPG (65 aa)). Positions 144–160 (AGYGSTGYGASGGGIGN) are enriched in gly residues. A compositionally biased stretch (basic and acidic residues) spans 165-188 (YVREEHRVDHGEKKGIMDKIKEKL). A 2-2 repeat occupies 183–190 (KIKEKLPG).

It belongs to the plant dehydrin family. As to expression, shoots, roots, and cotyledon from dehydrating seedlings.

The chain is Dehydrin DHN1 (DHN1) from Pisum sativum (Garden pea).